Here is a 549-residue protein sequence, read N- to C-terminus: Cation/acetate symporter ActP (549 aa).

13 helical membrane-spanning segments follow: residues 33 to 53 (WQAI…TYWA), 77 to 97 (LAIA…ALVF), 103 to 123 (GLIY…LIAE), 148 to 168 (ILSA…QMVG), 183 to 203 (IAVV…GMLA), 206 to 226 (WVQI…AFMV), 262 to 282 (ISAL…PHIL), 303 to 323 (GFMG…IMLV), 355 to 375 (LFLG…VAGL), 404 to 424 (VSKI…VLFE), 428 to 448 (IAFM…PIIL), 464 to 484 (GGWL…TIWV), and 493 to 513 (IFPY…GIWF).

It belongs to the sodium:solute symporter (SSF) (TC 2.A.21) family.

Its subcellular location is the cell inner membrane. Its function is as follows. Transports acetate. The protein is Cation/acetate symporter ActP of Escherichia coli O6:K15:H31 (strain 536 / UPEC).